The primary structure comprises 311 residues: Aspartate carbamoyltransferase catalytic subunit (311 aa).

Carbamoyl phosphate contacts are provided by Arg-58 and Thr-59. An L-aspartate-binding site is contributed by Lys-86. Carbamoyl phosphate contacts are provided by Arg-108, His-136, and Gln-139. Residues Arg-169 and Arg-223 each contribute to the L-aspartate site. Residues Gly-264 and Pro-265 each contribute to the carbamoyl phosphate site.

It belongs to the aspartate/ornithine carbamoyltransferase superfamily. ATCase family. As to quaternary structure, heterododecamer (2C3:3R2) of six catalytic PyrB chains organized as two trimers (C3), and six regulatory PyrI chains organized as three dimers (R2).

It catalyses the reaction carbamoyl phosphate + L-aspartate = N-carbamoyl-L-aspartate + phosphate + H(+). Its pathway is pyrimidine metabolism; UMP biosynthesis via de novo pathway; (S)-dihydroorotate from bicarbonate: step 2/3. In terms of biological role, catalyzes the condensation of carbamoyl phosphate and aspartate to form carbamoyl aspartate and inorganic phosphate, the committed step in the de novo pyrimidine nucleotide biosynthesis pathway. In Ruegeria pomeroyi (strain ATCC 700808 / DSM 15171 / DSS-3) (Silicibacter pomeroyi), this protein is Aspartate carbamoyltransferase catalytic subunit.